The chain runs to 216 residues: LexA repressor (216 aa).

Positions 28–48 form a DNA-binding region, H-T-H motif; the sequence is RAEIAAEFGFSSPNAAEEHLR. Residues Ser134 and Lys171 each act as for autocatalytic cleavage activity in the active site.

It belongs to the peptidase S24 family. As to quaternary structure, homodimer.

The enzyme catalyses Hydrolysis of Ala-|-Gly bond in repressor LexA.. Its function is as follows. Represses a number of genes involved in the response to DNA damage (SOS response), including recA and lexA. In the presence of single-stranded DNA, RecA interacts with LexA causing an autocatalytic cleavage which disrupts the DNA-binding part of LexA, leading to derepression of the SOS regulon and eventually DNA repair. In Ralstonia nicotianae (strain ATCC BAA-1114 / GMI1000) (Ralstonia solanacearum), this protein is LexA repressor.